A 123-amino-acid polypeptide reads, in one-letter code: UPF0102 protein APP7_1414 (123 aa).

It belongs to the UPF0102 family.

This is UPF0102 protein APP7_1414 from Actinobacillus pleuropneumoniae serotype 7 (strain AP76).